A 465-amino-acid polypeptide reads, in one-letter code: Alpha-galacturonidase (465 aa).

11–78 provides a ligand contact to NAD(+); sequence ITIAYIGGGS…GKWLYKACET (68 aa). Residue Asn157 coordinates substrate. Mn(2+) is bound at residue Cys179. Catalysis depends on His180, which acts as the Proton donor. His216 contributes to the Mn(2+) binding site.

The protein belongs to the glycosyl hydrolase 4 family. Homotetramer. NAD(+) serves as cofactor. Requires Mn(2+) as cofactor.

It carries out the reaction [(1-&gt;4)-alpha-D-galacturonosyl](n) + H2O = alpha-D-galacturonate + [(1-&gt;4)-alpha-D-galacturonosyl](n-1). In terms of biological role, alpha-galacturonidase able to catalyze the hydrolysis of the chromogenic substrate p-nitrophenyl-alpha-D-galacturonic acid (pNPalphaGalUA). It is probable that alpha-1,4-di-galacturonate (GalUA(2)) is the naturally occurring substrate. This is Alpha-galacturonidase from Thermoanaerobacterium saccharolyticum (strain DSM 8691 / JW/SL-YS485).